Reading from the N-terminus, the 458-residue chain is Trk system potassium uptake protein TrkA (458 aa).

The 123-residue stretch at 1 to 123 (MKIIILGAGQ…SDAVPIDHLI (123 aa)) folds into the RCK N-terminal 1 domain. NAD(+)-binding positions include 7–11 (GAGQV), aspartate 30, 73–74 (TS), and arginine 98. The region spanning 143–227 (LQVVNFAEGK…IRAVMSELQR (85 aa)) is the RCK C-terminal 1 domain. Residues 232–348 (YKRIMLVGGG…VQGSVIDIAI (117 aa)) enclose the RCK N-terminal 2 domain. 234 to 262 (RIMLVGGGNIGAGLARRLEKDYSVKLIER) serves as a coordination point for NAD(+). Residues 368–453 (VGVSSLRRGV…ITDVERLFQP (86 aa)) enclose the RCK C-terminal 2 domain.

It localises to the cell inner membrane. Its function is as follows. Part of the constitutive potassium transport systems TrkG and TrkH. May regulate the transport activity of TrkG and TrkH systems. Binds to NAD(+) and NADH. This is Trk system potassium uptake protein TrkA (trkA) from Escherichia coli O157:H7.